A 505-amino-acid chain; its full sequence is Catalase (505 aa).

The interval 1-25 is disordered; sequence MSRQDKKLTGVFGHPVSDRENSMTA. Residues H56 and N129 contribute to the active site. A heme-binding site is contributed by Y339.

Belongs to the catalase family. As to quaternary structure, homodimer. Heme serves as cofactor.

It carries out the reaction 2 H2O2 = O2 + 2 H2O. Its function is as follows. Decomposes hydrogen peroxide into water and oxygen; serves to protect cells from the toxic effects of hydrogen peroxide. The polypeptide is Catalase (katA) (Staphylococcus aureus (strain MRSA252)).